The sequence spans 640 residues: Chaperone protein DnaK (640 aa).

The residue at position 201 (threonine 201) is a Phosphothreonine; by autocatalysis. The span at 603-621 (AASADQGGAPGADAGNAGK) shows a compositional bias: low complexity. The interval 603–625 (AASADQGGAPGADAGNAGKAQDD) is disordered.

This sequence belongs to the heat shock protein 70 family.

In terms of biological role, acts as a chaperone. In Stenotrophomonas maltophilia (strain K279a), this protein is Chaperone protein DnaK.